A 161-amino-acid chain; its full sequence is Dihydrofolate reductase (161 aa).

The 160-residue stretch at 2–161 folds into the DHFR domain; it reads KISLISAISN…YNFCFEILSR (160 aa). 6–8 provides a ligand contact to substrate; the sequence is ISA. Residues 7-8 and 15-20 each bind NADP(+); these read SA and IGHNNK. Substrate is bound at residue aspartate 28. 44 to 47 contributes to the NADP(+) binding site; the sequence is GRLT. Position 59 (arginine 59) interacts with substrate. Residues 64 to 66 and 96 to 101 each bind NADP(+); these read ISH and IGGSKI. Threonine 115 contacts substrate.

The protein belongs to the dihydrofolate reductase family.

It catalyses the reaction (6S)-5,6,7,8-tetrahydrofolate + NADP(+) = 7,8-dihydrofolate + NADPH + H(+). It functions in the pathway cofactor biosynthesis; tetrahydrofolate biosynthesis; 5,6,7,8-tetrahydrofolate from 7,8-dihydrofolate: step 1/1. Its function is as follows. Key enzyme in folate metabolism. Catalyzes an essential reaction for de novo glycine and purine synthesis, and for DNA precursor synthesis. The sequence is that of Dihydrofolate reductase (folA) from Buchnera aphidicola subsp. Schizaphis graminum (strain Sg).